The following is a 467-amino-acid chain: Adenosylhomocysteinase (467 aa).

Substrate contacts are provided by T68, D144, and E169. 170–172 provides a ligand contact to NAD(+); that stretch reads TTT. Substrate is bound by residues K199 and D203. NAD(+) is bound by residues N204, 233–238, E256, N305, 326–328, and N373; these read GYGDVG and IGH.

This sequence belongs to the adenosylhomocysteinase family. Requires NAD(+) as cofactor.

It is found in the cytoplasm. It carries out the reaction S-adenosyl-L-homocysteine + H2O = L-homocysteine + adenosine. It functions in the pathway amino-acid biosynthesis; L-homocysteine biosynthesis; L-homocysteine from S-adenosyl-L-homocysteine: step 1/1. Its function is as follows. May play a key role in the regulation of the intracellular concentration of adenosylhomocysteine. In Acinetobacter baylyi (strain ATCC 33305 / BD413 / ADP1), this protein is Adenosylhomocysteinase.